The following is a 204-amino-acid chain: Guanine-specific ADP-ribosyl transferase (204 aa).

Positions 1–42 are cleaved as a signal peptide; the sequence is MITTSLRRRTAAAVLSLSAVLATTAATAPGAAPAPSAAPAKA. Cysteines 46 and 76 form a disulfide. Residues 81 to 85 and lysine 98 contribute to the NADH site; that span reads RSDSR. GDP-binding positions include 111 to 114, 132 to 134, tryptophan 159, and glutamine 162; these read VLVN and WYK. The PN (phosphate-nicotinamide) loop signature appears at 132–136; sequence WYKSG. Cysteine 180 and cysteine 194 are disulfide-bonded.

It belongs to the pierisin ADP-ribosyltransferase family. In terms of assembly, monomer.

Its subcellular location is the secreted. The catalysed reaction is guanosine + NAD(+) = N(2)-(ADP-D-ribosyl)-guanosine + nicotinamide + H(+). The enzyme catalyses a 2'-deoxyguanosine in DNA + NAD(+) = an N(2)-(ADP-L-ribosyl)-2'-deoxyguanosine in DNA + nicotinamide + H(+). It catalyses the reaction 2'-deoxyguanosine + NAD(+) = N(2)-(ADP-D-ribosyl)-2'-deoxyguanosine + nicotinamide + H(+). It carries out the reaction GMP + NAD(+) = N(2)-(ADP-D-ribosyl)-GMP + nicotinamide + H(+). The catalysed reaction is GTP + NAD(+) = N(2)-(ADP-D-ribosyl)-GTP + nicotinamide + H(+). The enzyme catalyses dGMP + NAD(+) = N(2)-(ADP-D-ribosyl)-dGMP + nicotinamide + H(+). It catalyses the reaction dGTP + NAD(+) = N(2)-(ADP-D-ribosyl)-dGTP + nicotinamide + H(+). It carries out the reaction 3',5'-cyclic GMP + NAD(+) = N(2)-(ADP-D-ribosyl)-3',5'-cyclic GMP + nicotinamide + H(+). The catalysed reaction is guanine + NAD(+) = N(2)-(ADP-D-ribosyl)-guanine + nicotinamide + H(+). The enzyme catalyses GDP + NAD(+) = N(2)-(ADP-D-ribosyl)-GDP + nicotinamide + H(+). With respect to regulation, inhibited by NADH. In terms of biological role, ADP-ribosylates the N2 amino group of guanosine, deoxyguanosine, GMP, dGMP, cGMP, GTP and dGTP; oligo-guanosine, oligo-deoxyguanosine and tRNA are ADP-ribosylated less efficiently, while dsDNA is a very poor substrate. Also acts on GDP. The polypeptide is Guanine-specific ADP-ribosyl transferase (Streptomyces coelicolor (strain ATCC BAA-471 / A3(2) / M145)).